A 20-amino-acid chain; its full sequence is Brevinin-1SPd (20 aa).

C14 and C20 are oxidised to a cystine.

As to expression, expressed by the skin glands.

The protein localises to the secreted. In terms of biological role, antimicrobial peptide with activity against Gram-negative and Gram-positive bacteria (MIC=13 uM against E.coli, MIC=3 uM against S.aureus) and fungi (MIC=3 uM against C.albicans). Shows hemolytic activity on human erythrocytes (HC(50)=8 uM). In Lithobates septentrionalis (Mink frog), this protein is Brevinin-1SPd.